Here is a 700-residue protein sequence, read N- to C-terminus: Autophagy-related protein 13 (700 aa).

Residues 319 to 352 form a disordered region; it reads GSINSSSSPPPGATQSNQSVSSFSTSKPIPVTLN. A compositionally biased stretch (low complexity) spans 332–344; sequence TQSNQSVSSFSTS. The segment at 399-407 is ATG17-binding; sequence SSFGSRFRT. The ATG1-binding stretch occupies residues 428-487; sequence TPNNPILHNFRSRNKSPSVSSTELGPSSSIYMDDDLDSFMKMLDSKPDLRFPSNSPSVYE. Positions 506-532 are enriched in polar residues; it reads EQQQHGSPSSNQIMIHSQSQTSQSQVF. Disordered regions lie at residues 506 to 562, 576 to 637, and 649 to 700; these read EQQQ…PGVS, HASS…NPEL, and ESDD…NQEF. The segment covering 595-631 has biased composition (low complexity); that stretch reads SSPPASATAVATVHNSLRRLTSSSQRTNTNSTNSSTR. Basic and acidic residues predominate over residues 656 to 667; the sequence is DEHSPRSTDTKS.

This sequence belongs to the ATG13 family. Fungi subfamily. Hypophosphorylated form interacts with ATG1 to form the ATG1-ATG13 kinase complex. The ATG1-ATG13 complex interacts with the ATG17-ATG29-ATG31 complex through direct interaction with ATG17. Interacts with VAC8.

It localises to the cytoplasm. The protein resides in the preautophagosomal structure. In terms of biological role, activates the ATG1 kinase in a nutritional condition dependent manner through the TOR pathway, leading to autophagy. Involved in ATG9 and ATG23 cycling through the pre-autophagosomal structure. Also involved in cytoplasm to vacuole transport (Cvt) and more specifically in Cvt vesicle formation. Seems to play a role in the switching machinery regulating the conversion between the Cvt pathway and autophagy. Finally, ATG13 is also required for glycogen storage during stationary phase. Its function is as follows. Acts as a negative regulator of xylose alcoholic fermentation, a role that is not related to autophagy. This chain is Autophagy-related protein 13, found in Ogataea parapolymorpha (strain ATCC 26012 / BCRC 20466 / JCM 22074 / NRRL Y-7560 / DL-1) (Yeast).